The chain runs to 594 residues: Protein REBELOTE (594 aa).

The span at 1-13 (MGKLGKKARKFAK) shows a compositional bias: basic residues. 2 disordered regions span residues 1-21 (MGKLGKKARKFAKKNLQSVEK) and 35-58 (AKRNERHQAGDKQEKKVEQQPKKR). 3 short sequence motifs (nuclear localization signal) span residues 8–15 (ARKFAKKN), 35–42 (AKRNERHQ), and 512–519 (LKKFHERS). The segment covering 36–58 (KRNERHQAGDKQEKKVEQQPKKR) has biased composition (basic and acidic residues).

It belongs to the NOC2 family. As to quaternary structure, interacts with SWA2, NOC2 and NOC3 in both the nucleolus and nucleoplasm. Binds to ENAP1 and OBE1. Expressed at low levels in roots, shoots, leaves, stems, inflorescences, flowers and siliques, with highest levels dividing tissues.

Its subcellular location is the nucleus. It is found in the nucleolus. The protein localises to the nucleoplasm. In terms of biological role, collaboratively with CYP40/SQN and ULT1, influences floral meristem (FM) determinacy in an AGAMOUS and SUPERMAN-dependent manner, thus contributing to the floral developmental homeostasis. The protein is Protein REBELOTE of Arabidopsis thaliana (Mouse-ear cress).